The following is a 928-amino-acid chain: MVQIPENPLILVDGSSYLYRAYHAFPPLTNSAGEPTGAMYGVLNMLRSLIMQYQPTHAAVVFDAKGKTFRDELFEHYKSHRPPMPDDLRAQIEPLHAMVKAMGLPLLAVSGVEADDVIGTLAREAEKVGRPVLISTGDKDMAQLVTPNITLINTMTNTILGPDEVVNKYGVPPELIIDFLALMGDSSDNIPGVPGVGEKTAQALLQGLGGLDTLYAEPEKIAGLTFRGAKTMAGKLAQNKDVAYLSYKLATIKTDVELELTCEQLEVQQPIADELLGLFKKYEFKRWTADVESGKWLQAKGAKPAAKPQETVVIDESPSEPAAALSYENYVTILDDVTLESWIEKLKKAPVFAFDTETDSLDNIAANLVGLSFAIEPGVAAYVPVAHDYLDAPDQISRQRALELLKPLLEDEKVRKVGQNLKYDRGVLQNYGIELRGIAFDTMLESYILNSVAGRHDMDSLSDRWLKHKTITFEDIAGKGKNQLTFNQIALEEAGRYAAEDADVTLQLHLKMWPELQQHKGPLNVFENIEMPLVPVLSRVERNGVKIDPAVLHKHSEEITLRLAELEKKAHDIAGEAFNLSSTKQLQTILFEKQGIKPLKKTPGGAPSTSEEVLEELALDYPLPKVILEYRGLAKLKSTYTDKLPLMINPKTGRVHTSYHQAVTATGRLSSTDPNLQNIPVRNEEGRRIRQAFIAPEDYLIVSADYSQIELRIMAHLSRDKGLLTAFAEGKDIHRATAAEVFGLPLDSVTGEQRRSAKAINFGLIYGMSAFGLSRQLNIPRKEAQKYMDLYFERYPGVLEYMERTRAQAKEQGYVETLEGRRLYLPDIKSSNAARRAGAERAAINAPMQGTAADIIKRAMIAVDAWLQAEQPRVRMIMQVHDELVFEVHKDDLDAVAKRIHQLMENCTRIDVPLLVEVGSGENWDQAH.

In terms of domain architecture, 5'-3' exonuclease spans 1 to 323; it reads MVQIPENPLI…IDESPSEPAA (323 aa). The 194-residue stretch at 324–517 folds into the 3'-5' exonuclease domain; sequence ALSYENYVTI…LHLKMWPELQ (194 aa). The tract at residues 324-928 is klenow fragment; the sequence is ALSYENYVTI…GSGENWDQAH (605 aa). Positions 521–928 are polymerase; the sequence is GPLNVFENIE…GSGENWDQAH (408 aa).

Belongs to the DNA polymerase type-A family. Single-chain monomer with multiple functions.

The catalysed reaction is DNA(n) + a 2'-deoxyribonucleoside 5'-triphosphate = DNA(n+1) + diphosphate. Its function is as follows. In addition to polymerase activity, this DNA polymerase exhibits 3'-5' and 5'-3' exonuclease activity. It is able to utilize nicked circular duplex DNA as a template and can unwind the parental DNA strand from its template. This Salmonella typhimurium (strain LT2 / SGSC1412 / ATCC 700720) protein is DNA polymerase I (polA).